A 248-amino-acid chain; its full sequence is Orotidine 5'-phosphate decarboxylase (248 aa).

Substrate is bound by residues aspartate 22, lysine 44, 71-80 (DLKFHDIPNT), threonine 131, arginine 192, glutamine 201, glycine 221, and arginine 222. The active-site Proton donor is lysine 73.

The protein belongs to the OMP decarboxylase family. Type 1 subfamily. Homodimer.

It catalyses the reaction orotidine 5'-phosphate + H(+) = UMP + CO2. It functions in the pathway pyrimidine metabolism; UMP biosynthesis via de novo pathway; UMP from orotate: step 2/2. Functionally, catalyzes the decarboxylation of orotidine 5'-monophosphate (OMP) to uridine 5'-monophosphate (UMP). The polypeptide is Orotidine 5'-phosphate decarboxylase (Photorhabdus laumondii subsp. laumondii (strain DSM 15139 / CIP 105565 / TT01) (Photorhabdus luminescens subsp. laumondii)).